The following is a 284-amino-acid chain: Putative thiosulfate sulfurtransferase SseB (284 aa).

Rhodanese domains follow at residues 20-138 (AGDP…SIET) and 169-280 (GAGG…RPVG). A substrate-binding site is contributed by Arg183. Cys241 functions as the Cysteine persulfide intermediate in the catalytic mechanism.

It catalyses the reaction thiosulfate + hydrogen cyanide = thiocyanate + sulfite + 2 H(+). In Mycobacterium tuberculosis (strain CDC 1551 / Oshkosh), this protein is Putative thiosulfate sulfurtransferase SseB (sseB).